Reading from the N-terminus, the 364-residue chain is S-adenosylmethionine:tRNA ribosyltransferase-isomerase (364 aa).

This sequence belongs to the QueA family. Monomer.

The protein resides in the cytoplasm. The catalysed reaction is 7-aminomethyl-7-carbaguanosine(34) in tRNA + S-adenosyl-L-methionine = epoxyqueuosine(34) in tRNA + adenine + L-methionine + 2 H(+). Its pathway is tRNA modification; tRNA-queuosine biosynthesis. Functionally, transfers and isomerizes the ribose moiety from AdoMet to the 7-aminomethyl group of 7-deazaguanine (preQ1-tRNA) to give epoxyqueuosine (oQ-tRNA). In Synechococcus sp. (strain CC9902), this protein is S-adenosylmethionine:tRNA ribosyltransferase-isomerase.